Consider the following 152-residue polypeptide: Transcriptional repressor NrdR (152 aa).

A zinc finger spans residues 3–34 (CPYCNASETKVIDSRLAAEGAQVRRRRSCNSC). The region spanning 49–139 (PRIIKSSGKI…VYRDFQDIDA (91 aa)) is the ATP-cone domain.

Belongs to the NrdR family. Requires Zn(2+) as cofactor.

Its function is as follows. Negatively regulates transcription of bacterial ribonucleotide reductase nrd genes and operons by binding to NrdR-boxes. The polypeptide is Transcriptional repressor NrdR (Psychrobacter cryohalolentis (strain ATCC BAA-1226 / DSM 17306 / VKM B-2378 / K5)).